Consider the following 259-residue polypeptide: Phosphate import ATP-binding protein PstB (259 aa).

One can recognise an ABC transporter domain in the interval 13-254 (LEVNNLNFHY…PRLQRTEDYI (242 aa)). 45–52 (GPSGCGKS) is an ATP binding site.

Belongs to the ABC transporter superfamily. Phosphate importer (TC 3.A.1.7) family. The complex is composed of two ATP-binding proteins (PstB), two transmembrane proteins (PstC and PstA) and a solute-binding protein (PstS).

The protein resides in the cell inner membrane. The catalysed reaction is phosphate(out) + ATP + H2O = ADP + 2 phosphate(in) + H(+). Part of the ABC transporter complex PstSACB involved in phosphate import. Responsible for energy coupling to the transport system. In Pasteurella multocida (strain Pm70), this protein is Phosphate import ATP-binding protein PstB.